The following is a 199-amino-acid chain: Probable cobalt-precorrin-6B C(15)-methyltransferase (decarboxylating) (199 aa).

Residues Thr24, 48–52 (GCGTG), Asp72, and Ala101 each bind S-adenosyl-L-methionine.

The protein belongs to the methyltransferase superfamily. Archaeal-type CbiT family.

The catalysed reaction is Co-precorrin-6B + S-adenosyl-L-methionine = Co-precorrin-7 + S-adenosyl-L-homocysteine + CO2. The protein operates within cofactor biosynthesis; adenosylcobalamin biosynthesis; cob(II)yrinate a,c-diamide from sirohydrochlorin (anaerobic route): step 8/10. In terms of biological role, catalyzes the methylation of C-15 in cobalt-precorrin-6B followed by the decarboxylation of C-12 to form cobalt-precorrin-7. This Saccharolobus islandicus (strain Y.N.15.51 / Yellowstone #2) (Sulfolobus islandicus) protein is Probable cobalt-precorrin-6B C(15)-methyltransferase (decarboxylating).